Here is a 186-residue protein sequence, read N- to C-terminus: uncharacterized protein (186 aa).

The interval 121–146 is disordered; it reads TSPLLKKNKPSSDQDDTSKQSFDQDE.

Belongs to the chlamydial CPn_0422/CT_273/TC_0545 family.

This is an uncharacterized protein from Chlamydia muridarum (strain MoPn / Nigg).